Consider the following 593-residue polypeptide: Bifunctional lycopene cyclase/phytoene synthase (593 aa).

The tract at residues 1–242 (MAYDYALVHL…IVFGMAVFDQ (242 aa)) is lycopene beta-cyclase. 7 consecutive transmembrane segments (helical) span residues 8–28 (VHLKYTIPLAALLTVIAYPIF), 31–51 (IHFLQIGSLIVVSFLATLPWD), 77–97 (IEELFFFVIQTYITSLFYILL), 117–136 (IARGKVIGQGILVALTLYGV), 147–167 (YLGLILAWAFPFALLTFTVAG), 169–189 (FILTLPLTSTVVPIIIPTVYL), and 231–251 (ILIVFGMAVFDQYLAIIFAFP). A phytoene synthase region spans residues 249 to 593 (AFPHLFPKVP…KTVLKALFSA (345 aa)).

In the N-terminal section; belongs to the lycopene beta-cyclase family. It in the C-terminal section; belongs to the phytoene/squalene synthase family.

It is found in the membrane. It catalyses the reaction all-trans-lycopene = gamma-carotene. The catalysed reaction is gamma-carotene = all-trans-beta-carotene. It carries out the reaction 2 (2E,6E,10E)-geranylgeranyl diphosphate = 15-cis-phytoene + 2 diphosphate. Its pathway is carotenoid biosynthesis; beta-carotene biosynthesis. It participates in carotenoid biosynthesis; phytoene biosynthesis; all-trans-phytoene from geranylgeranyl diphosphate: step 1/1. Functionally, bifunctional enzyme that catalyzes the reactions from geranylgeranyl diphosphate to phytoene (phytoene synthase) and lycopene to beta-carotene via the intermediate gamma-carotene (lycopene cyclase). This chain is Bifunctional lycopene cyclase/phytoene synthase, found in Podospora anserina (strain S / ATCC MYA-4624 / DSM 980 / FGSC 10383) (Pleurage anserina).